Consider the following 247-residue polypeptide: Coproheme decarboxylase (247 aa).

Fe-coproporphyrin III contacts are provided by residues R129, 143-147, H170, Q183, and S221; that span reads YPMDK. Y143 is a catalytic residue.

Belongs to the ChdC family. Type 1 subfamily. Fe-coproporphyrin III serves as cofactor.

The enzyme catalyses Fe-coproporphyrin III + 2 H2O2 + 2 H(+) = heme b + 2 CO2 + 4 H2O. It catalyses the reaction Fe-coproporphyrin III + H2O2 + H(+) = harderoheme III + CO2 + 2 H2O. The catalysed reaction is harderoheme III + H2O2 + H(+) = heme b + CO2 + 2 H2O. Its pathway is porphyrin-containing compound metabolism; protoheme biosynthesis. Involved in coproporphyrin-dependent heme b biosynthesis. Catalyzes the decarboxylation of Fe-coproporphyrin III (coproheme) to heme b (protoheme IX), the last step of the pathway. The reaction occurs in a stepwise manner with a three-propionate intermediate. The protein is Coproheme decarboxylase of Bacillus cereus (strain AH820).